Consider the following 138-residue polypeptide: Trypsin inhibitor DE5 alpha chain (138 aa).

Residues Cys-40 and Cys-86 are joined by a disulfide bond.

The protein belongs to the protease inhibitor I3 (leguminous Kunitz-type inhibitor) family. As to quaternary structure, heterodimer of an alpha and a beta chain linked by a disulfide bond.

Its function is as follows. Inhibition of trypsin. The sequence is that of Trypsin inhibitor DE5 alpha chain from Adenanthera pavonina (Sandal bead tree).